Here is a 504-residue protein sequence, read N- to C-terminus: Glutamate--tRNA ligase (504 aa).

Residues 9–19 carry the 'HIGH' region motif; sequence PSPTGDPHVGT. The 'KMSKS' region motif lies at 248–252; the sequence is KISKR. Lys-251 contacts ATP.

Belongs to the class-I aminoacyl-tRNA synthetase family. Glutamate--tRNA ligase type 1 subfamily. As to quaternary structure, monomer.

The protein localises to the cytoplasm. The catalysed reaction is tRNA(Glu) + L-glutamate + ATP = L-glutamyl-tRNA(Glu) + AMP + diphosphate. In terms of biological role, catalyzes the attachment of glutamate to tRNA(Glu) in a two-step reaction: glutamate is first activated by ATP to form Glu-AMP and then transferred to the acceptor end of tRNA(Glu). The chain is Glutamate--tRNA ligase from Acidothermus cellulolyticus (strain ATCC 43068 / DSM 8971 / 11B).